A 194-amino-acid chain; its full sequence is A-type ATP synthase subunit E (194 aa).

Belongs to the V-ATPase E subunit family. As to quaternary structure, has multiple subunits with at least A(3), B(3), C, D, E, F, H, I and proteolipid K(x).

It is found in the cell membrane. In terms of biological role, component of the A-type ATP synthase that produces ATP from ADP in the presence of a proton gradient across the membrane. The sequence is that of A-type ATP synthase subunit E from Saccharolobus islandicus (strain M.16.27) (Sulfolobus islandicus).